Here is a 133-residue protein sequence, read N- to C-terminus: Holo-[acyl-carrier-protein] synthase (133 aa).

The Mg(2+) site is built by aspartate 8 and glutamate 57.

The protein belongs to the P-Pant transferase superfamily. AcpS family. Requires Mg(2+) as cofactor.

Its subcellular location is the cytoplasm. The catalysed reaction is apo-[ACP] + CoA = holo-[ACP] + adenosine 3',5'-bisphosphate + H(+). Functionally, transfers the 4'-phosphopantetheine moiety from coenzyme A to a Ser of acyl-carrier-protein. This chain is Holo-[acyl-carrier-protein] synthase, found in Parvibaculum lavamentivorans (strain DS-1 / DSM 13023 / NCIMB 13966).